We begin with the raw amino-acid sequence, 124 residues long: Fluoride-specific ion channel FluC (124 aa).

The next 4 membrane-spanning stretches (helical) occupy residues Phe-5–Leu-25, Leu-35–Leu-55, Leu-63–Leu-83, and Leu-98–Val-118. Na(+)-binding residues include Gly-73 and Thr-76.

Belongs to the fluoride channel Fluc/FEX (TC 1.A.43) family.

Its subcellular location is the cell inner membrane. It carries out the reaction fluoride(in) = fluoride(out). Na(+) is not transported, but it plays an essential structural role and its presence is essential for fluoride channel function. Functionally, fluoride-specific ion channel. Important for reducing fluoride concentration in the cell, thus reducing its toxicity. This Paracoccus denitrificans (strain Pd 1222) protein is Fluoride-specific ion channel FluC.